The sequence spans 114 residues: Pancreatic progenitor cell differentiation and proliferation factor (114 aa).

A Phosphoserine modification is found at Ser9. Disordered stretches follow at residues 22 to 47 (GSTS…PGLP) and 75 to 114 (AEHS…GPPS). Positions 23 to 33 (STSSNSSCSST) are enriched in low complexity. Residues 102–114 (GGQSSTASAGPPS) show a composition bias toward polar residues.

It belongs to the PPDPF family.

In terms of biological role, probable regulator of exocrine pancreas development. This is Pancreatic progenitor cell differentiation and proliferation factor (PPDPF) from Homo sapiens (Human).